Consider the following 1196-residue polypeptide: Major DNA-binding protein (1196 aa).

The segment at 499–512 is a zinc-finger region; it reads CNLCTFETRHACAH. Short sequence motifs (required for filament formation) lie at residues 843–844 and 1142–1144; these read FW and FNF. The required for nuclear localization stretch occupies residues 1171–1196; it reads RKRAFHGDDPFGEGPPEKKDLTLDML. Residues 1176 to 1196 form a disordered region; sequence HGDDPFGEGPPEKKDLTLDML.

It belongs to the herpesviridae major DNA-binding protein family. As to quaternary structure, homooligomers. Forms double-helical filaments necessary for the formation of replication compartments within the host nucleus. Interacts with the origin-binding protein. Interacts with the helicase primase complex; this interaction stimulates primer synthesis activity of the helicase-primase complex. Interacts with the DNA polymerase. Interacts with the alkaline exonuclease; this interaction increases its nuclease processivity.

The protein resides in the host nucleus. Functionally, plays several crucial roles in viral infection. Participates in the opening of the viral DNA origin to initiate replication by interacting with the origin-binding protein. May disrupt loops, hairpins and other secondary structures present on ssDNA to reduce and eliminate pausing of viral DNA polymerase at specific sites during elongation. Promotes viral DNA recombination by performing strand-transfer, characterized by the ability to transfer a DNA strand from a linear duplex to a complementary single-stranded DNA circle. Can also catalyze the renaturation of complementary single strands. Additionally, reorganizes the host cell nucleus, leading to the formation of prereplicative sites and replication compartments. This process is driven by the protein which can form double-helical filaments in the absence of DNA. This is Major DNA-binding protein from Human herpesvirus 2 (strain HG52) (HHV-2).